Reading from the N-terminus, the 255-residue chain is Taurine import ATP-binding protein TauB (255 aa).

An ABC transporter domain is found at 2 to 229 (LQISHLYADY…RFVAGESSRS (228 aa)). An ATP-binding site is contributed by 34–41 (GPSGCGKT).

The protein belongs to the ABC transporter superfamily. Taurine importer (TC 3.A.1.17.1) family. As to quaternary structure, the complex is composed of two ATP-binding proteins (TauB), two transmembrane proteins (TauC) and a solute-binding protein (TauA).

The protein resides in the cell inner membrane. The enzyme catalyses taurine(out) + ATP + H2O = taurine(in) + ADP + phosphate + H(+). In terms of biological role, part of the ABC transporter complex TauABC involved in taurine import. Responsible for energy coupling to the transport system. This is Taurine import ATP-binding protein TauB from Shigella flexneri.